The following is an 803-amino-acid chain: Phenylalanine--tRNA ligase beta subunit (803 aa).

The tRNA-binding domain occupies 39–150; the sequence is AKVLAPFTIA…ADAPVGAAYA (112 aa). One can recognise a B5 domain in the interval 400 to 475; the sequence is ADDKIIDFPL…RIVGVDKVPL (76 aa). Positions 453, 459, 462, and 463 each coordinate Mg(2+). An FDX-ACB domain is found at 709–802; the sequence is SAFHPVSRDF…VTKKTGGSLR (94 aa).

The protein belongs to the phenylalanyl-tRNA synthetase beta subunit family. Type 1 subfamily. In terms of assembly, tetramer of two alpha and two beta subunits. Mg(2+) serves as cofactor.

Its subcellular location is the cytoplasm. It catalyses the reaction tRNA(Phe) + L-phenylalanine + ATP = L-phenylalanyl-tRNA(Phe) + AMP + diphosphate + H(+). The sequence is that of Phenylalanine--tRNA ligase beta subunit from Rhodopseudomonas palustris (strain ATCC BAA-98 / CGA009).